A 1020-amino-acid chain; its full sequence is Calcium-transporting ATPase 10, plasma membrane-type (1020 aa).

Residues 1–175 are Cytoplasmic-facing; sequence MESYLEENFG…FVWEALQDTT (175 aa). The segment at 21 to 32 is interaction with calmodulin; sequence ALRRWRKLCGVV. Transmembrane regions (helical) follow at residues 176 to 196 and 199 to 219; these read LIIL…MEGW and GAHD…VTAT. The Cytoplasmic segment spans residues 220–263; it reads SDYRQSLQFKDLDKEKKKIQVQVTRNGFRQRLSIYDLLPGDVVH. Helical transmembrane passes span 264–284 and 352–372; these read LAIG…SLLI and GVAT…FIVL. The Cytoplasmic portion of the chain corresponds to 373–400; the sequence is SQGLISKKYHEGLLLSWSGDDALEMLEH. Residues 401–421 traverse the membrane as a helical segment; that stretch reads FAIAVTIVVVAVPEGLPLAVT. Aspartate 456 acts as the 4-aspartylphosphate intermediate in catalysis. The Mg(2+) site is built by aspartate 758 and aspartate 762. The helical transmembrane segment at 843–863 threads the bilayer; the sequence is LTAVQLLWVNMIMDTLGALAL. Residues 864–887 are Cytoplasmic-facing; the sequence is ATEPPNDDLMKREPVGRTGKFITN. Helical transmembrane passes span 888–907 and 924–944; these read VMWR…MWYL and VVLN…NEIS. The Cytoplasmic segment spans residues 945–961; it reads SREMEKINVLRGILKNY. Transmembrane regions (helical) follow at residues 962 to 982 and 995 to 1015; these read VFLG…QFLG and WIAS…IKLL. Over 1016 to 1020 the chain is Cytoplasmic; that stretch reads PVGSS.

Belongs to the cation transport ATPase (P-type) (TC 3.A.3) family. Type IIB subfamily.

Its subcellular location is the membrane. The enzyme catalyses Ca(2+)(in) + ATP + H2O = Ca(2+)(out) + ADP + phosphate + H(+). Its activity is regulated as follows. Activated by calmodulin. In terms of biological role, this magnesium-dependent enzyme catalyzes the hydrolysis of ATP coupled with the translocation of calcium from the cytosol out of the cell, into the endoplasmic reticulum, or into organelles. The protein is Calcium-transporting ATPase 10, plasma membrane-type of Oryza sativa subsp. japonica (Rice).